The following is a 267-amino-acid chain: 5'-methylthioadenosine nucleosidase (267 aa).

Residue E38 is the Proton acceptor of the active site. S-methyl-5'-thioadenosine contacts are provided by residues T116, 199–202 (KDME), and D225. Adenine is bound by residues K199 and D225. Catalysis depends on D225, which acts as the Proton donor.

This sequence belongs to the PNP/UDP phosphorylase family. MtnN subfamily. Homodimer. Interacts with CBL3 in a calcium-dependent manner. As to expression, expressed in roots, leaves, stems, cauline leaves and flowers.

It carries out the reaction S-methyl-5'-thioadenosine + H2O = 5-(methylsulfanyl)-D-ribose + adenine. Its pathway is amino-acid biosynthesis; L-methionine biosynthesis via salvage pathway; S-methyl-5-thio-alpha-D-ribose 1-phosphate from S-methyl-5'-thioadenosine (hydrolase route): step 1/2. With respect to regulation, inhibited by CBL3 in a calcium-dependent manner. Inhibited by 5'-methylthiotubercidin (MTT) and by formycin A (FMA). Functionally, enzyme of the methionine cycle that catalyzes the irreversible cleavage of the glycosidic bond in 5'-methylthioadenosine (MTA) to adenine and 5'-methylthioribose. Contributes to the maintenance of AdoMet homeostasis and is required to sustain high rates of ethylene synthesis. Inactive towards S-adenosylhomocysteine (SAH/AdoHcy). The sequence is that of 5'-methylthioadenosine nucleosidase (MTN1) from Arabidopsis thaliana (Mouse-ear cress).